Consider the following 978-residue polypeptide: Regulator of telomere elongation helicase 1 homolog (978 aa).

One can recognise a Helicase ATP-binding domain in the interval N7–T318. ATP is bound at residue S42 to T49. [4Fe-4S] cluster-binding residues include C159, C177, C186, and C222. Positions D265 to H268 match the DEAH box motif.

This sequence belongs to the helicase family. RAD3/XPD subfamily.

The protein resides in the nucleus. It carries out the reaction ATP + H2O = ADP + phosphate + H(+). Functionally, a probable ATP-dependent DNA helicase implicated in DNA repair and the maintenance of genomic stability. Acts as an anti-recombinase to counteract toxic recombination and limit crossover during meiosis. Regulates meiotic recombination and crossover homeostasis by physically dissociating strand invasion events and thereby promotes noncrossover repair by meiotic synthesis dependent strand annealing (SDSA) as well as disassembly of D loop recombination intermediates. The polypeptide is Regulator of telomere elongation helicase 1 homolog (Culex quinquefasciatus (Southern house mosquito)).